We begin with the raw amino-acid sequence, 177 residues long: Protein-export protein SecB (177 aa).

It belongs to the SecB family. In terms of assembly, homotetramer, a dimer of dimers. One homotetramer interacts with 1 SecA dimer.

Its subcellular location is the cytoplasm. Its function is as follows. One of the proteins required for the normal export of preproteins out of the cell cytoplasm. It is a molecular chaperone that binds to a subset of precursor proteins, maintaining them in a translocation-competent state. It also specifically binds to its receptor SecA. This chain is Protein-export protein SecB, found in Ehrlichia canis (strain Jake).